Here is a 493-residue protein sequence, read N- to C-terminus: Tripartite motif-containing protein 5 (493 aa).

A2 carries the post-translational modification N-acetylalanine. The RING-type zinc-finger motif lies at 15–59 (CPICLELLTQPLSLDCGHSFCQACLTANHEKSMLDKGESSCPVCR). Residue S86 is modified to Phosphoserine. Residues 90 to 132 (QKVDHCARHGEKLLLFCQEDGKVICWLCERSQEHRGHHTFLTE) form a B box-type zinc finger. Residues C95, H98, C117, and H123 each coordinate Zn(2+). The stretch at 131 to 240 (TEEVAQECQV…LISDLEHRLQ (110 aa)) forms a coiled coil. The required for interaction with GABARAP and for autophagy stretch occupies residues 185–198 (FEQLRDILDWEESN). Residues 281 to 493 (LKGMLEVFRE…VPMTLCSPSS (213 aa)) enclose the B30.2/SPRY domain.

Belongs to the TRIM/RBCC family. As to quaternary structure, can form homodimers and homotrimers. In addition to lower-order dimerization, also exhibits a higher-order multimerization and both low- and high-order multimerizations are essential for its restriction activity. Interacts with BTBD1 and BTBD2. Interacts with PSMC4, PSMC5, PSMD7 and HSPA8/HSC70. Interacts (via B30.2/SPRY domain) with HSPA1A/B. Interacts with PSMC2, MAP3K7/TAK1, TAB2 and TAB3. Interacts with SQSTM1. Interacts with TRIM6 and TRIM34. Interacts with ULK1 (phosphorylated form), GABARAP, GABARAPL1, GABARAPL2, MAP1LC3A, MAP1LC3C and BECN1. Degraded in a proteasome-independent fashion in the absence of viral infection but in a proteasome-dependent fashion following exposure to restriction sensitive virus. Post-translationally, autoubiquitinated in a RING finger- and UBE2D2-dependent manner. Monoubiquitinated by TRIM21. Deubiquitinated by Yersinia YopJ. Ubiquitination may not lead to proteasomal degradation.

The protein resides in the cytoplasm. It localises to the nucleus. The catalysed reaction is S-ubiquitinyl-[E2 ubiquitin-conjugating enzyme]-L-cysteine + [acceptor protein]-L-lysine = [E2 ubiquitin-conjugating enzyme]-L-cysteine + N(6)-ubiquitinyl-[acceptor protein]-L-lysine.. The protein operates within protein modification; protein ubiquitination. Its function is as follows. Capsid-specific restriction factor that prevents infection from non-host-adapted retroviruses. Blocks viral replication early in the life cycle, after viral entry but before reverse transcription. In addition to acting as a capsid-specific restriction factor, also acts as a pattern recognition receptor that activates innate immune signaling in response to the retroviral capsid lattice. Binding to the viral capsid triggers its E3 ubiquitin ligase activity, and in concert with the heterodimeric ubiquitin conjugating enzyme complex UBE2V1-UBE2N (also known as UBC13-UEV1A complex) generates 'Lys-63'-linked polyubiquitin chains, which in turn are catalysts in the autophosphorylation of the MAP3K7/TAK1 complex (includes TAK1, TAB2, and TAB3). Activation of the MAP3K7/TAK1 complex by autophosphorylation results in the induction and expression of NF-kappa-B and MAPK-responsive inflammatory genes, thereby leading to an innate immune response in the infected cell. Plays a role in regulating autophagy through activation of autophagy regulator BECN1 by causing its dissociation from its inhibitors BCL2 and TAB2. This chain is Tripartite motif-containing protein 5 (TRIM5), found in Gorilla gorilla gorilla (Western lowland gorilla).